Here is an 85-residue protein sequence, read N- to C-terminus: Toxin BmKaTX15 (85 aa).

The signal sequence occupies residues 1-19 (MNYLVFFSLALLVMTGVES). The LCN-type CS-alpha/beta domain occupies 21 to 83 (RDGYIADDKN…VPIRVPGKCN (63 aa)). 4 disulfides stabilise this stretch: C31–C82, C35–C55, C41–C65, and C45–C67.

The protein belongs to the long (4 C-C) scorpion toxin superfamily. Sodium channel inhibitor family. Alpha subfamily. Expressed by the venom gland.

The protein resides in the secreted. In terms of biological role, alpha toxins bind voltage-independently at site-3 of sodium channels (Nav) and inhibit the inactivation of the activated channels, thereby blocking neuronal transmission. This is Toxin BmKaTX15 from Olivierus martensii (Manchurian scorpion).